The chain runs to 573 residues: Membrane protein insertase YidC (573 aa).

The chain crosses the membrane as a helical span at residues 6–26; it reads VFLIFAWLMVAALLWMEWGKD. The disordered stretch occupies residues 63-82; that stretch reads PQAGSPAAVPATSTTTATPA. 5 helical membrane-spanning segments follow: residues 355 to 375, 379 to 399, 446 to 466, 488 to 508, and 524 to 544; these read FSIM…LHSF, WGWA…PLSA, GGCL…WVLV, PYFI…KLTP, and PLVF…YWVV.

The protein belongs to the OXA1/ALB3/YidC family. Type 1 subfamily. Interacts with the Sec translocase complex via SecD. Specifically interacts with transmembrane segments of nascent integral membrane proteins during membrane integration.

Its subcellular location is the cell inner membrane. In terms of biological role, required for the insertion and/or proper folding and/or complex formation of integral membrane proteins into the membrane. Involved in integration of membrane proteins that insert both dependently and independently of the Sec translocase complex, as well as at least some lipoproteins. Aids folding of multispanning membrane proteins. The polypeptide is Membrane protein insertase YidC (Xanthomonas campestris pv. campestris (strain 8004)).